The chain runs to 364 residues: Putative acetyl-CoA C-acetyltransferase YhfS (364 aa).

The active-site Acyl-thioester intermediate is the cysteine 82. The active-site Proton acceptor is the histidine 318.

The protein belongs to the thiolase-like superfamily. Thiolase family.

May be involved in fatty acid metabolism. The polypeptide is Putative acetyl-CoA C-acetyltransferase YhfS (yhfS) (Bacillus subtilis (strain 168)).